A 32-amino-acid chain; its full sequence is Secreted protein F2 (32 aa).

The protein localises to the secreted. This is Secreted protein F2 from Globisporangium hypogynum (Pythium hypogynum).